Consider the following 1450-residue polypeptide: Actin cytoskeleton-regulatory complex protein PAN1 (1450 aa).

Residues 1-140 (MYSNPNNFFG…PPPPVKPQAT (140 aa)) are disordered. Low complexity-rich tracts occupy residues 15 to 37 (GPGA…QQPD) and 59 to 71 (PGLQ…LQPQ). A compositionally biased stretch (polar residues) spans 72 to 83 (FTGYGQTPQQGM). Positions 93–119 (IPQQYQQQFQQQQTQQQQPQQQQMPFA) are enriched in low complexity. Over residues 120-136 (AAPPQPTQTLAPPPPVK) the composition is skewed to pro residues. 2 consecutive EH domains span residues 181–270 (DQAK…VSSM) and 444–533 (EKTR…STRN). EF-hand domains lie at 214–249 (LDGD…CNLK) and 477–512 (LEKP…IYRK). Disordered stretches follow at residues 600–625 (RSSA…SNEE), 788–851 (SDQD…WEDA), and 865–1450 (LQRS…RVLD). The stretch at 622–741 (SNEELSLDQL…ELFRLKDAKA (120 aa)) forms a coiled coil. Positions 788 to 850 (SDQDAEKRLE…TEHEKRRWED (63 aa)) are enriched in basic and acidic residues. Residues 902–924 (SPASISRTASPAAPPAAGGSYSS) show a composition bias toward low complexity. The stretch at 960-1148 (ETAAQRAERE…LEAMDDDSSS (189 aa)) forms a coiled coil. Composition is skewed to basic and acidic residues over residues 965-997 (RAER…RLAE), 1026-1101 (AKPD…EEEK), and 1110-1140 (EAKE…RQLE). Residues 1141–1153 (AMDDDSSSDDEGP) show a composition bias toward acidic residues. Over residues 1156 to 1169 (ITPQASTPTMNDSH) the composition is skewed to polar residues. 2 stretches are compositionally biased toward pro residues: residues 1178 to 1188 (QPTPPPAPVVS) and 1222 to 1239 (APAP…PPQP). Residues 1265 to 1275 (RRPDDDGWGSD) are compositionally biased toward basic and acidic residues. Positions 1276–1285 (KDEEDEESDD) are enriched in acidic residues. Residues 1314-1323 (GDKSATSPTV) show a composition bias toward polar residues. Composition is skewed to pro residues over residues 1327–1352 (VAPP…PMPG), 1361–1375 (PGAP…PPMP), and 1381–1411 (PGAP…PPAA). The WH2 domain maps to 1417-1434 (RPAGLLGQIQAGKALKKT).

The protein belongs to the PAN1 family. Component of the PAN1 actin cytoskeleton-regulatory complex.

The protein resides in the cell membrane. Its subcellular location is the endosome membrane. It localises to the cytoplasm. It is found in the cytoskeleton. The protein localises to the actin patch. Component of the PAN1 actin cytoskeleton-regulatory complex required for the internalization of endosomes during actin-coupled endocytosis. The complex links the site of endocytosis to the cell membrane-associated actin cytoskeleton. Mediates uptake of external molecules and vacuolar degradation of plasma membrane proteins. Plays a role in the proper organization of the cell membrane-associated actin cytoskeleton and promotes its destabilization. This Chaetomium globosum (strain ATCC 6205 / CBS 148.51 / DSM 1962 / NBRC 6347 / NRRL 1970) (Soil fungus) protein is Actin cytoskeleton-regulatory complex protein PAN1 (PAN1).